The sequence spans 209 residues: ATP-dependent Clp protease proteolytic subunit (209 aa).

The Nucleophile role is filled by S106. Residue H131 is part of the active site.

This sequence belongs to the peptidase S14 family. In terms of assembly, fourteen ClpP subunits assemble into 2 heptameric rings which stack back to back to give a disk-like structure with a central cavity, resembling the structure of eukaryotic proteasomes.

Its subcellular location is the cytoplasm. The enzyme catalyses Hydrolysis of proteins to small peptides in the presence of ATP and magnesium. alpha-casein is the usual test substrate. In the absence of ATP, only oligopeptides shorter than five residues are hydrolyzed (such as succinyl-Leu-Tyr-|-NHMec, and Leu-Tyr-Leu-|-Tyr-Trp, in which cleavage of the -Tyr-|-Leu- and -Tyr-|-Trp bonds also occurs).. Its function is as follows. Cleaves peptides in various proteins in a process that requires ATP hydrolysis. Has a chymotrypsin-like activity. Plays a major role in the degradation of misfolded proteins. This is ATP-dependent Clp protease proteolytic subunit from Brucella suis biovar 1 (strain 1330).